A 676-amino-acid chain; its full sequence is Pescadillo homolog (676 aa).

Residues 298 to 327 (IAAMADDEDEQEVEMAEADAEDDDEEENTE) are a coiled coil. 4 disordered regions span residues 298–338 (IAAM…TAPD), 413–439 (PLAN…STKP), 478–502 (VKPK…EAEA), and 515–676 (EVDD…AERA). Acidic residues predominate over residues 302-327 (ADDEDEQEVEMAEADAEDDDEEENTE). The region spanning 351-466 (EIASLFAPFT…KLLRPDLYAP (116 aa)) is the BRCT domain. Low complexity predominate over residues 415–427 (ANGASAAGAEDAA). Composition is skewed to acidic residues over residues 515 to 524 (EVDDDEDMDA), 539 to 557 (DVAD…DAEG), and 565 to 577 (FDDE…DISE). Residues 568 to 676 (ESEAESDISE…EKAKAAAERA (109 aa)) adopt a coiled-coil conformation. Composition is skewed to basic and acidic residues over residues 579–608 (EAAR…KKEQ), 620–631 (KRAEEEERDRQK), 643–659 (KRIE…SENL), and 666–676 (LEKAKAAAERA).

The protein belongs to the pescadillo family. Component of the NOP7 complex, composed of ERB1, NOP7 and YTM1. The complex is held together by ERB1, which interacts with NOP7 via its N-terminal domain and with YTM1 via a high-affinity interaction between the seven-bladed beta-propeller domains of the 2 proteins. The NOP7 complex associates with the 66S pre-ribosome.

It localises to the nucleus. Its subcellular location is the nucleolus. The protein resides in the nucleoplasm. Component of the NOP7 complex, which is required for maturation of the 25S and 5.8S ribosomal RNAs and formation of the 60S ribosome. This Phaeosphaeria nodorum (strain SN15 / ATCC MYA-4574 / FGSC 10173) (Glume blotch fungus) protein is Pescadillo homolog.